The chain runs to 354 residues: DNA polymerase IV (354 aa).

A UmuC domain is found at 14–198 (IIHIDMDAFF…MDIAKFHGVG (185 aa)). Residues aspartate 18 and aspartate 116 each coordinate Mg(2+). Residue glutamate 117 is part of the active site.

The protein belongs to the DNA polymerase type-Y family. Monomer. Mg(2+) serves as cofactor.

The protein localises to the cytoplasm. It carries out the reaction DNA(n) + a 2'-deoxyribonucleoside 5'-triphosphate = DNA(n+1) + diphosphate. Its function is as follows. Poorly processive, error-prone DNA polymerase involved in untargeted mutagenesis. Copies undamaged DNA at stalled replication forks, which arise in vivo from mismatched or misaligned primer ends. These misaligned primers can be extended by PolIV. Exhibits no 3'-5' exonuclease (proofreading) activity. May be involved in translesional synthesis, in conjunction with the beta clamp from PolIII. The polypeptide is DNA polymerase IV (Streptococcus sanguinis (strain SK36)).